Consider the following 114-residue polypeptide: Progonadoliberin-2 (114 aa).

Residues 1–25 form the signal peptide; that stretch reads MASSMLGFLLLLLLLMAAHPGPSEA. The tract at residues 22 to 80 is disordered; that stretch reads PSEAQHWSHGWYPGGKRASNSPQDPQSALRPPAPSAAQTAHSFRSAALASPEDSVPWEG. Gly35 bears the Glycine amide mark.

It belongs to the GnRH family. In terms of tissue distribution, midbrain.

It is found in the secreted. In terms of biological role, stimulates the secretion of gonadotropins; it stimulates the secretion of both luteinizing and follicle-stimulating hormones. The chain is Progonadoliberin-2 (GNRH2) from Tupaia belangeri (Common tree shrew).